The sequence spans 118 residues: Hydrogenase maturation factor HypA (118 aa).

Ni(2+) is bound at residue His-2. The Zn(2+) site is built by Cys-73, Cys-76, Cys-89, and Cys-92.

Belongs to the HypA/HybF family.

Functionally, involved in the maturation of [NiFe] hydrogenases. Required for nickel insertion into the metal center of the hydrogenase. The protein is Hydrogenase maturation factor HypA of Shewanella oneidensis (strain ATCC 700550 / JCM 31522 / CIP 106686 / LMG 19005 / NCIMB 14063 / MR-1).